Reading from the N-terminus, the 205-residue chain is Methylthioribulose-1-phosphate dehydratase (205 aa).

H94 and H96 together coordinate Zn(2+).

It belongs to the aldolase class II family. MtnB subfamily. Zn(2+) serves as cofactor.

The catalysed reaction is 5-(methylsulfanyl)-D-ribulose 1-phosphate = 5-methylsulfanyl-2,3-dioxopentyl phosphate + H2O. It participates in amino-acid biosynthesis; L-methionine biosynthesis via salvage pathway; L-methionine from S-methyl-5-thio-alpha-D-ribose 1-phosphate: step 2/6. Its function is as follows. Catalyzes the dehydration of methylthioribulose-1-phosphate (MTRu-1-P) into 2,3-diketo-5-methylthiopentyl-1-phosphate (DK-MTP-1-P). In Pectobacterium carotovorum subsp. carotovorum (strain PC1), this protein is Methylthioribulose-1-phosphate dehydratase.